A 164-amino-acid chain; its full sequence is MKEFLAVGEIINTHGIKGEVKVYPLTDDMKRFKKLKEVFIDGEEKKILSCKLQPNNVVLKIEGIDSIEEANKYRKKLLEIKRENSVKLPKGSYFIADLIECRVIDEDGREIGQISDVIKTGSNDVYEVKGKSEVLVPAIKDIVTNIDIENKTVTIKPLEIWQCE.

The PRC barrel domain occupies 90–161 (KGSYFIADLI…TVTIKPLEIW (72 aa)).

The protein belongs to the RimM family. As to quaternary structure, binds ribosomal protein uS19.

The protein localises to the cytoplasm. An accessory protein needed during the final step in the assembly of 30S ribosomal subunit, possibly for assembly of the head region. Essential for efficient processing of 16S rRNA. May be needed both before and after RbfA during the maturation of 16S rRNA. It has affinity for free ribosomal 30S subunits but not for 70S ribosomes. This Clostridium botulinum (strain ATCC 19397 / Type A) protein is Ribosome maturation factor RimM.